The chain runs to 348 residues: Protein RecA (348 aa).

ATP is bound at residue 65-72 (GPESSGKT).

It belongs to the RecA family.

It localises to the cytoplasm. Functionally, can catalyze the hydrolysis of ATP in the presence of single-stranded DNA, the ATP-dependent uptake of single-stranded DNA by duplex DNA, and the ATP-dependent hybridization of homologous single-stranded DNAs. It interacts with LexA causing its activation and leading to its autocatalytic cleavage. The chain is Protein RecA from Enterococcus faecalis (strain ATCC 700802 / V583).